Here is a 1306-residue protein sequence, read N- to C-terminus: Clustered mitochondria protein homolog (1306 aa).

Over residues 1–11 (MAVNNEVNNAA) the composition is skewed to low complexity. The tract at residues 1–47 (MAVNNEVNNAASETPTDVSSSSQKLATEETALTNGADHEEEDGGEAG) is disordered. Residues 12-33 (SETPTDVSSSSQKLATEETALT) are compositionally biased toward polar residues. The region spanning 336-580 (DITRTQENYL…RVTPLDITWM (245 aa)) is the Clu domain. Disordered stretches follow at residues 630–689 (ERKR…QERI) and 912–956 (KQSQ…SPAA). The span at 656-689 (EPAKSEEPTENGELAKKSESDEAAEPSKPDQERI) shows a compositional bias: basic and acidic residues. TPR repeat units follow at residues 1032–1065 (ARVY…SERT), 1074–1107 (LLNY…WKVV), and 1116–1149 (ITTI…CEEV). The tract at residues 1275-1306 (FIEGSDQSNQNKKRPGRSNPKRRGGAAATAGK) is disordered. The segment covering 1285–1298 (NKKRPGRSNPKRRG) has biased composition (basic residues).

The protein belongs to the CLU family. As to quaternary structure, may associate with the eukaryotic translation initiation factor 3 (eIF-3) complex.

Its subcellular location is the cytoplasm. In terms of biological role, mRNA-binding protein involved in proper cytoplasmic distribution of mitochondria. The sequence is that of Clustered mitochondria protein homolog from Botryotinia fuckeliana (strain B05.10) (Noble rot fungus).